The primary structure comprises 249 residues: DNA polymerase sliding clamp (249 aa).

Belongs to the PCNA family. As to quaternary structure, the subunits circularize to form a toroid; DNA passes through its center. Replication factor C (RFC) is required to load the toroid on the DNA. Homotrimer. Interacts with NucS.

Its function is as follows. Sliding clamp subunit that acts as a moving platform for DNA processing. Responsible for tethering the catalytic subunit of DNA polymerase and other proteins to DNA during high-speed replication. Regulates activity of NucS endonuclease and prevents non-specific cleavage. The sequence is that of DNA polymerase sliding clamp from Pyrococcus abyssi (strain GE5 / Orsay).